A 143-amino-acid polypeptide reads, in one-letter code: Nucleoside diphosphate kinase (143 aa).

ATP contacts are provided by Lys-11, Phe-59, Arg-87, Thr-93, Arg-104, and Asn-114. The active-site Pros-phosphohistidine intermediate is His-117.

Belongs to the NDK family. As to quaternary structure, homotetramer. Mg(2+) serves as cofactor.

It is found in the cytoplasm. The enzyme catalyses a 2'-deoxyribonucleoside 5'-diphosphate + ATP = a 2'-deoxyribonucleoside 5'-triphosphate + ADP. It carries out the reaction a ribonucleoside 5'-diphosphate + ATP = a ribonucleoside 5'-triphosphate + ADP. Major role in the synthesis of nucleoside triphosphates other than ATP. The ATP gamma phosphate is transferred to the NDP beta phosphate via a ping-pong mechanism, using a phosphorylated active-site intermediate. In Clostridium perfringens (strain SM101 / Type A), this protein is Nucleoside diphosphate kinase.